A 152-amino-acid chain; its full sequence is Transcriptional regulator MraZ (152 aa).

SpoVT-AbrB domains lie at 5 to 52 (ATLV…PLPE) and 81 to 124 (ASEC…DETT).

Belongs to the MraZ family. Forms oligomers.

The protein localises to the cytoplasm. It is found in the nucleoid. Functionally, negatively regulates its own expression and that of the subsequent genes in the proximal part of the division and cell wall (dcw) gene cluster. Acts by binding directly to DNA. May also regulate the expression of genes outside the dcw cluster. The sequence is that of Transcriptional regulator MraZ from Salmonella paratyphi A (strain ATCC 9150 / SARB42).